The sequence spans 92 residues: Small ribosomal subunit protein uS19c (92 aa).

This sequence belongs to the universal ribosomal protein uS19 family.

It localises to the plastid. The protein localises to the chloroplast. Functionally, protein S19 forms a complex with S13 that binds strongly to the 16S ribosomal RNA. This Guizotia abyssinica (Niger) protein is Small ribosomal subunit protein uS19c.